Reading from the N-terminus, the 199-residue chain is Holliday junction branch migration complex subunit RuvA (199 aa).

The interval 1 to 64 (MIGRITGILL…EDGHFLYGFA (64 aa)) is domain I. The domain II stretch occupies residues 65–143 (SADERAAFRQ…RALPGFGAST (79 aa)). Positions 144–152 (VPGAAAQPA) are flexible linker. The segment at 152-199 (ADSRSDILNALLALGYSDKEAQSALKAIPPETGVSDGIRQALKLLSKA) is domain III.

Belongs to the RuvA family. Homotetramer. Forms an RuvA(8)-RuvB(12)-Holliday junction (HJ) complex. HJ DNA is sandwiched between 2 RuvA tetramers; dsDNA enters through RuvA and exits via RuvB. An RuvB hexamer assembles on each DNA strand where it exits the tetramer. Each RuvB hexamer is contacted by two RuvA subunits (via domain III) on 2 adjacent RuvB subunits; this complex drives branch migration. In the full resolvosome a probable DNA-RuvA(4)-RuvB(12)-RuvC(2) complex forms which resolves the HJ.

The protein resides in the cytoplasm. Its function is as follows. The RuvA-RuvB-RuvC complex processes Holliday junction (HJ) DNA during genetic recombination and DNA repair, while the RuvA-RuvB complex plays an important role in the rescue of blocked DNA replication forks via replication fork reversal (RFR). RuvA specifically binds to HJ cruciform DNA, conferring on it an open structure. The RuvB hexamer acts as an ATP-dependent pump, pulling dsDNA into and through the RuvAB complex. HJ branch migration allows RuvC to scan DNA until it finds its consensus sequence, where it cleaves and resolves the cruciform DNA. The chain is Holliday junction branch migration complex subunit RuvA from Aromatoleum aromaticum (strain DSM 19018 / LMG 30748 / EbN1) (Azoarcus sp. (strain EbN1)).